Consider the following 233-residue polypeptide: 5'-methylthioadenosine/S-adenosylhomocysteine nucleosidase (233 aa).

Glu12 acts as the Proton acceptor in catalysis. Substrate-binding positions include Gly78, Ile153, and 174-175; that span reads ME. The active-site Proton donor is the Asp198.

It belongs to the PNP/UDP phosphorylase family. MtnN subfamily.

It carries out the reaction S-adenosyl-L-homocysteine + H2O = S-(5-deoxy-D-ribos-5-yl)-L-homocysteine + adenine. The catalysed reaction is S-methyl-5'-thioadenosine + H2O = 5-(methylsulfanyl)-D-ribose + adenine. It catalyses the reaction 5'-deoxyadenosine + H2O = 5-deoxy-D-ribose + adenine. It participates in amino-acid biosynthesis; L-methionine biosynthesis via salvage pathway; S-methyl-5-thio-alpha-D-ribose 1-phosphate from S-methyl-5'-thioadenosine (hydrolase route): step 1/2. Its function is as follows. Catalyzes the irreversible cleavage of the glycosidic bond in both 5'-methylthioadenosine (MTA) and S-adenosylhomocysteine (SAH/AdoHcy) to adenine and the corresponding thioribose, 5'-methylthioribose and S-ribosylhomocysteine, respectively. Also cleaves 5'-deoxyadenosine, a toxic by-product of radical S-adenosylmethionine (SAM) enzymes, into 5-deoxyribose and adenine. This Exiguobacterium sp. (strain ATCC BAA-1283 / AT1b) protein is 5'-methylthioadenosine/S-adenosylhomocysteine nucleosidase.